Reading from the N-terminus, the 503-residue chain is Cytochrome P450 monooxygenase roqO (503 aa).

The helical transmembrane segment at 11 to 31 threads the bilayer; sequence YSGTACAISLFIFGITLLFPF. N205 carries an N-linked (GlcNAc...) asparagine glycan. Heme is bound at residue C444.

This sequence belongs to the cytochrome P450 family. The cofactor is heme.

The protein resides in the membrane. Its pathway is alkaloid biosynthesis. Functionally, cytochrome P450 monooxygenase; part of the gene cluster that mediates the biosynthesis of the mycotoxin meleagrin. The first stage is catalyzed by the dipeptide synthase roqA which condenses histidine and tryptophan to produce histidyltryptophanyldiketopiperazine (HTD). HTD is then converted to roquefortine C through two possible pathways. In the first pathway, prenyltransferase roqD transforms HTD to the intermediate roquefortine D, which is in turn converted to roquefortine C by the cytochrome P450 monooxygenase roqR. In the second pathway, HTD is first converted to the intermediate dehydrohistidyltryptophanyldi-ketopiperazine (DHTD) by roqR which is then prenylated by roqD to form roquefortine C. Roquefortine C can be further transformed to meleagrin via three more reactions including oxydation to glandicolin A by roqM, which is further reduced to glandicoline B by roqO. Finally, glandicoline B is converted to meleagrin by the glandicoline B O-methyltransferase roqN. More studies identified further branching and additional metabolites produced by the roquefortine/meleagrin cluster, including roquefortine F, roquefortine L, roquefortine M, roquefortine N and neoxaline. This chain is Cytochrome P450 monooxygenase roqO, found in Penicillium rubens (strain ATCC 28089 / DSM 1075 / NRRL 1951 / Wisconsin 54-1255) (Penicillium chrysogenum).